Consider the following 122-residue polypeptide: Large ribosomal subunit protein uL14 (122 aa).

It belongs to the universal ribosomal protein uL14 family. As to quaternary structure, part of the 50S ribosomal subunit. Forms a cluster with proteins L3 and L19. In the 70S ribosome, L14 and L19 interact and together make contacts with the 16S rRNA in bridges B5 and B8.

Binds to 23S rRNA. Forms part of two intersubunit bridges in the 70S ribosome. The protein is Large ribosomal subunit protein uL14 of Sulfurovum sp. (strain NBC37-1).